The chain runs to 453 residues: Bifunctional protein GlmU (453 aa).

Positions 1 to 231 (MERTCLAIIL…EVEMTGCNNR (231 aa)) are pyrophosphorylase. UDP-N-acetyl-alpha-D-glucosamine contacts are provided by residues 10-13 (LAAG), lysine 24, glutamine 77, 82-83 (GT), 105-107 (YGD), glycine 143, glutamate 157, asparagine 172, and asparagine 229. Aspartate 107 is a Mg(2+) binding site. Asparagine 229 is a Mg(2+) binding site. Residues 232 to 252 (AELAFIERLWQERRRHELMLS) form a linker region. Residues 253–453 (GVTMIAPETV…AIKAAKKGSH (201 aa)) form an N-acetyltransferase region. 2 residues coordinate UDP-N-acetyl-alpha-D-glucosamine: arginine 318 and lysine 336. The Proton acceptor role is filled by histidine 348. Residues tyrosine 351 and asparagine 362 each coordinate UDP-N-acetyl-alpha-D-glucosamine. Acetyl-CoA is bound by residues alanine 365, 371-372 (NY), serine 390, serine 408, and arginine 425.

The protein in the N-terminal section; belongs to the N-acetylglucosamine-1-phosphate uridyltransferase family. It in the C-terminal section; belongs to the transferase hexapeptide repeat family. As to quaternary structure, homotrimer. It depends on Mg(2+) as a cofactor.

Its subcellular location is the cytoplasm. The enzyme catalyses alpha-D-glucosamine 1-phosphate + acetyl-CoA = N-acetyl-alpha-D-glucosamine 1-phosphate + CoA + H(+). It catalyses the reaction N-acetyl-alpha-D-glucosamine 1-phosphate + UTP + H(+) = UDP-N-acetyl-alpha-D-glucosamine + diphosphate. Its pathway is nucleotide-sugar biosynthesis; UDP-N-acetyl-alpha-D-glucosamine biosynthesis; N-acetyl-alpha-D-glucosamine 1-phosphate from alpha-D-glucosamine 6-phosphate (route II): step 2/2. It participates in nucleotide-sugar biosynthesis; UDP-N-acetyl-alpha-D-glucosamine biosynthesis; UDP-N-acetyl-alpha-D-glucosamine from N-acetyl-alpha-D-glucosamine 1-phosphate: step 1/1. It functions in the pathway bacterial outer membrane biogenesis; LPS lipid A biosynthesis. Its function is as follows. Catalyzes the last two sequential reactions in the de novo biosynthetic pathway for UDP-N-acetylglucosamine (UDP-GlcNAc). The C-terminal domain catalyzes the transfer of acetyl group from acetyl coenzyme A to glucosamine-1-phosphate (GlcN-1-P) to produce N-acetylglucosamine-1-phosphate (GlcNAc-1-P), which is converted into UDP-GlcNAc by the transfer of uridine 5-monophosphate (from uridine 5-triphosphate), a reaction catalyzed by the N-terminal domain. The chain is Bifunctional protein GlmU from Rhizobium rhizogenes (strain K84 / ATCC BAA-868) (Agrobacterium radiobacter).